The chain runs to 396 residues: Phosphoglycerate kinase (396 aa).

Residues 21–23 (DFN), Arg36, 59–62 (HLGK), Arg119, and Arg156 each bind substrate. Residues Lys206, Glu325, and 352–355 (GGDS) contribute to the ATP site.

This sequence belongs to the phosphoglycerate kinase family. As to quaternary structure, monomer.

The protein resides in the cytoplasm. The enzyme catalyses (2R)-3-phosphoglycerate + ATP = (2R)-3-phospho-glyceroyl phosphate + ADP. It participates in carbohydrate degradation; glycolysis; pyruvate from D-glyceraldehyde 3-phosphate: step 2/5. The protein is Phosphoglycerate kinase of Staphylococcus haemolyticus (strain JCSC1435).